The chain runs to 356 residues: WAT1-related protein At1g68170 (356 aa).

The next 10 membrane-spanning stretches (helical) occupy residues 4–24 (ITAMVVVQIATAGLNIFFKLA), 33–53 (VLVAYRLLFATLFMIPICFIF), 65–85 (LMLLALLSGLLGVVIPSILTI), 94–114 (TFTSAAGVLTPLVTFIFAALL), 125–145 (VGLAKVFGTLFGVGGALVFIF), 176–196 (ISILGALLVFGGNISISLWFL), 210–230 (WNATLMNMMGGVVAMLVALCW), 245–265 (LLTIAYAAILISGMVVAVNAW), 273–293 (LFVSVFSPVGLVIVALVGSFL), and 298–318 (LHLGSIIGTVIIVGALYIVLW). 2 EamA domains span residues 14–142 (TAGL…GALV) and 191–317 (ISLW…YIVL).

The protein belongs to the drug/metabolite transporter (DMT) superfamily. Plant drug/metabolite exporter (P-DME) (TC 2.A.7.4) family.

Its subcellular location is the membrane. In Arabidopsis thaliana (Mouse-ear cress), this protein is WAT1-related protein At1g68170.